Here is a 718-residue protein sequence, read N- to C-terminus: Methionine--tRNA ligase (718 aa).

The 'HIGH' region signature appears at 27 to 37 (PYANGQIHIGH). Residues Cys-158, Cys-161, Cys-171, and Cys-174 each coordinate Zn(2+). The 'KMSKS' region signature appears at 348-352 (KMSKS). Lys-351 contacts ATP. Residues 612–718 (DFAKIDLRIA…SGAKPGMRVK (107 aa)) form the tRNA-binding domain.

Belongs to the class-I aminoacyl-tRNA synthetase family. MetG type 1 subfamily. Homodimer. Requires Zn(2+) as cofactor.

The protein localises to the cytoplasm. It catalyses the reaction tRNA(Met) + L-methionine + ATP = L-methionyl-tRNA(Met) + AMP + diphosphate. Is required not only for elongation of protein synthesis but also for the initiation of all mRNA translation through initiator tRNA(fMet) aminoacylation. The sequence is that of Methionine--tRNA ligase from Burkholderia orbicola (strain AU 1054).